A 184-amino-acid chain; its full sequence is ATP synthase subunit delta (184 aa).

This sequence belongs to the ATPase delta chain family. F-type ATPases have 2 components, F(1) - the catalytic core - and F(0) - the membrane proton channel. F(1) has five subunits: alpha(3), beta(3), gamma(1), delta(1), epsilon(1). F(0) has three main subunits: a(1), b(2) and c(10-14). The alpha and beta chains form an alternating ring which encloses part of the gamma chain. F(1) is attached to F(0) by a central stalk formed by the gamma and epsilon chains, while a peripheral stalk is formed by the delta and b chains.

It localises to the cell inner membrane. F(1)F(0) ATP synthase produces ATP from ADP in the presence of a proton or sodium gradient. F-type ATPases consist of two structural domains, F(1) containing the extramembraneous catalytic core and F(0) containing the membrane proton channel, linked together by a central stalk and a peripheral stalk. During catalysis, ATP synthesis in the catalytic domain of F(1) is coupled via a rotary mechanism of the central stalk subunits to proton translocation. Its function is as follows. This protein is part of the stalk that links CF(0) to CF(1). It either transmits conformational changes from CF(0) to CF(1) or is implicated in proton conduction. The protein is ATP synthase subunit delta of Magnetococcus marinus (strain ATCC BAA-1437 / JCM 17883 / MC-1).